A 1686-amino-acid chain; its full sequence is A disintegrin and metalloproteinase with thrombospondin motifs 7 (1686 aa).

Positions M1–G27 are cleaved as a signal peptide. The propeptide occupies A28–R236. Residue N94 is glycosylated (N-linked (GlcNAc...) asparagine). The Cysteine switch motif lies at S202–Y209. C204 contributes to the Zn(2+) binding site. Residues K242–P452 form the Peptidase M12B domain. Disulfide bonds link C318–C372, C347–C354, C366–C447, C405–C431, C474–C497, C485–C503, C492–C522, C516–C527, C550–C587, C554–C592, and C565–C577. H388 lines the Zn(2+) pocket. The active site involves E389. Residues H392 and H398 each coordinate Zn(2+). A Disintegrin domain is found at V462–V537. One can recognise a TSP type-1 1 domain in the interval D538 to P593. 2 N-linked (GlcNAc...) asparagine glycosylation sites follow: N693 and N778. The spacer stretch occupies residues H698 to H809. TSP type-1 domains lie at P821 to P880, A881 to V940, and C942 to R995. Disordered stretches follow at residues H1024 to N1043, P1080 to V1257, and L1344 to P1396. The segment covering D1182–Q1205 has biased composition (polar residues). The span at W1210 to G1226 shows a compositional bias: basic and acidic residues. Low complexity predominate over residues P1360–S1375. TSP type-1 domains follow at residues R1411–H1459, P1462–L1522, S1523–T1567, and P1569–E1629. The region spanning E1632 to S1672 is the PLAC domain. The tract at residues R1666–R1686 is disordered.

In terms of assembly, interacts with COMP. It depends on Zn(2+) as a cofactor. Post-translationally, N-glycosylated. Can be O-fucosylated by POFUT2 on a serine or a threonine residue found within the consensus sequence C1-X(2)-(S/T)-C2-G of the TSP type-1 repeat domains where C1 and C2 are the first and second cysteine residue of the repeat, respectively. Fucosylated repeats can then be further glycosylated by the addition of a beta-1,3-glucose residue by the glucosyltransferase, B3GALTL. Fucosylation mediates the efficient secretion of ADAMTS family members. Can also be C-glycosylated with one or two mannose molecules on tryptophan residues within the consensus sequence W-X-X-W of the TPRs. N- and C-glycosylations can also facilitate secretion. O-glycosylated proteoglycan; contains chondroitin sulfate. In terms of processing, may be cleaved by a furin endopeptidase. The precursor is sequentially processed. Expressed in heart, brain, placenta, lung, liver, skeletal muscle, kidney and pancreas. Detected in meniscus, bone, tendon, cartilage, synovium, fat and ligaments.

It localises to the secreted. The protein resides in the extracellular space. It is found in the extracellular matrix. Metalloprotease. Was previously shown to degrade COMP. However, a later study found no activity against COMP. This is A disintegrin and metalloproteinase with thrombospondin motifs 7 (ADAMTS7) from Homo sapiens (Human).